A 164-amino-acid polypeptide reads, in one-letter code: HTH-type transcriptional regulator IscR (164 aa).

One can recognise an HTH rrf2-type domain in the interval 2–131; sequence RLTSKGRYAV…NNITLGELVN (130 aa). The H-T-H motif DNA-binding region spans 28–51; it reads LADISERQGISLSYLEQLFSRLRK. Residues cysteine 92, cysteine 98, and cysteine 104 each contribute to the [2Fe-2S] cluster site.

[2Fe-2S] cluster is required as a cofactor.

Regulates the transcription of several operons and genes involved in the biogenesis of Fe-S clusters and Fe-S-containing proteins. This chain is HTH-type transcriptional regulator IscR, found in Salmonella choleraesuis (strain SC-B67).